Here is a 317-residue protein sequence, read N- to C-terminus: Pantothenate kinase (317 aa).

An ATP-binding site is contributed by 99–106; the sequence is GSVSVGKS.

It belongs to the prokaryotic pantothenate kinase family.

It is found in the cytoplasm. It carries out the reaction (R)-pantothenate + ATP = (R)-4'-phosphopantothenate + ADP + H(+). The protein operates within cofactor biosynthesis; coenzyme A biosynthesis; CoA from (R)-pantothenate: step 1/5. This chain is Pantothenate kinase, found in Histophilus somni (strain 2336) (Haemophilus somnus).